Here is a 712-residue protein sequence, read N- to C-terminus: Matrix metalloproteinase-9 (712 aa).

Positions 1 to 19 (MSPLQPLVLALLVLACCSA) are cleaved as a signal peptide. Positions 20 to 106 (VPRRRQPTVV…PRCGVPDVGR (87 aa)) are cleaved as a propeptide — activation peptide. Residue asparagine 38 is glycosylated (N-linked (GlcNAc...) asparagine). The short motif at 97-104 (PRCGVPDV) is the Cysteine switch element. Cysteine 99 lines the Zn(2+) pocket. Residues asparagine 120 and asparagine 127 are each glycosylated (N-linked (GlcNAc...) asparagine). Ca(2+)-binding residues include aspartate 131 and aspartate 165. The Zn(2+) site is built by histidine 175 and aspartate 177. Ca(2+) contacts are provided by aspartate 182, glycine 183, asparagine 185, and leucine 187. Position 190 (histidine 190) interacts with Zn(2+). Glycine 197, glutamine 199, and aspartate 201 together coordinate Ca(2+). Histidine 203 lines the Zn(2+) pocket. Ca(2+)-binding residues include aspartate 205, aspartate 206, and glutamate 208. 3 Fibronectin type-II domains span residues 225-273 (AKGA…FCPS), 283-331 (ADGK…FCPT), and 342-390 (AAGE…FCPD). Cystine bridges form between cysteine 230-cysteine 256, cysteine 244-cysteine 271, cysteine 288-cysteine 314, cysteine 302-cysteine 329, cysteine 347-cysteine 373, and cysteine 361-cysteine 388. Histidine 401 serves as a coordination point for Zn(2+). Glutamate 402 is a catalytic residue. Histidine 405 and histidine 411 together coordinate Zn(2+). The tract at residues 440-519 (QHLYGPRPEP…PTESPDPAED (80 aa)) is disordered. Over residues 455–465 (TTTTTTTTEPQ) the composition is skewed to low complexity. The segment covering 491-504 (TGPPAAGPTGPPTA) has biased composition (pro residues). Residues 505-514 (GPSAAPTESP) are compositionally biased toward low complexity. Cysteines 521 and 709 form a disulfide. 4 Hemopexin repeats span residues 523–568 (VDIF…WPAL), 569–613 (PRKL…GLGP), 615–662 (VAQV…FPGV), and 663–709 (PIST…LLKC).

This sequence belongs to the peptidase M10A family. Exists as monomer or homodimer; disulfide-linked. Also exists as heterodimer with LCN2. Macrophages and transformed cell lines produce only the monomeric form. Interacts with ECM1. Zn(2+) is required as a cofactor. Ca(2+) serves as cofactor. N- and O-glycosylated.

It localises to the secreted. The protein resides in the extracellular space. Its subcellular location is the extracellular matrix. The enzyme catalyses Cleavage of gelatin types I and V and collagen types IV and V.. In terms of biological role, matrix metalloproteinase that plays an essential role in local proteolysis of the extracellular matrix and in leukocyte migration. Could play a role in bone osteoclastic resorption. Cleaves KiSS1 at a Gly-|-Leu bond. Cleaves NINJ1 to generate the Secreted ninjurin-1 form. Cleaves type IV and type V collagen into large C-terminal three quarter fragments and shorter N-terminal one quarter fragments. Degrades fibronectin but not laminin or Pz-peptide. This chain is Matrix metalloproteinase-9, found in Bos taurus (Bovine).